Here is a 91-residue protein sequence, read N- to C-terminus: UPF0250 protein PputW619_0619 (91 aa).

Belongs to the UPF0250 family.

The sequence is that of UPF0250 protein PputW619_0619 from Pseudomonas putida (strain W619).